A 261-amino-acid chain; its full sequence is tRNA pseudouridine synthase A (261 aa).

Aspartate 53 functions as the Nucleophile in the catalytic mechanism. Tyrosine 111 contacts substrate.

The protein belongs to the tRNA pseudouridine synthase TruA family. In terms of assembly, homodimer.

The catalysed reaction is uridine(38/39/40) in tRNA = pseudouridine(38/39/40) in tRNA. Formation of pseudouridine at positions 38, 39 and 40 in the anticodon stem and loop of transfer RNAs. This chain is tRNA pseudouridine synthase A, found in Shouchella clausii (strain KSM-K16) (Alkalihalobacillus clausii).